Here is a 70-residue protein sequence, read N- to C-terminus: Small integral membrane protein 42 (70 aa).

Residues 26 to 46 (LVNVLFFFTPLMTLVTLLILV) form a helical membrane-spanning segment.

It is found in the membrane. This Homo sapiens (Human) protein is Small integral membrane protein 42.